A 452-amino-acid chain; its full sequence is Glutamyl-tRNA(Gln) amidotransferase subunit A (452 aa).

Residues K56 and S131 each act as charge relay system in the active site. S155 acts as the Acyl-ester intermediate in catalysis.

The protein belongs to the amidase family. GatA subfamily. Heterotrimer of A, B and C subunits.

The catalysed reaction is L-glutamyl-tRNA(Gln) + L-glutamine + ATP + H2O = L-glutaminyl-tRNA(Gln) + L-glutamate + ADP + phosphate + H(+). Functionally, allows the formation of correctly charged Gln-tRNA(Gln) through the transamidation of misacylated Glu-tRNA(Gln) in organisms which lack glutaminyl-tRNA synthetase. The reaction takes place in the presence of glutamine and ATP through an activated gamma-phospho-Glu-tRNA(Gln). This Campylobacter concisus (strain 13826) protein is Glutamyl-tRNA(Gln) amidotransferase subunit A.